The primary structure comprises 819 residues: Tegument protein UL47 homolog (819 aa).

The segment covering 1–15 has biased composition (basic residues); that stretch reads MQSGHYNRRQSRRQR. 2 disordered regions span residues 1-42 and 58-221; these read MQSG…THPP and LNSE…DYFS. Residues 11-31 carry the Nuclear localization signal motif; that stretch reads SRRQRISSNTTDSPRHTHGTR. A compositionally biased stretch (polar residues) spans 32-42; it reads YRSTNWYTHPP. Positions 62 to 72 are enriched in acidic residues; that stretch reads MDQDSSSDASD. Positions 82–93 are enriched in polar residues; sequence STYNGSEQNTST. The span at 94-109 shows a compositional bias: basic and acidic residues; that stretch reads SRHENRIFKLTEREAN. Repeat copies occupy residues 117 to 132, 133 to 148, 149 to 164, 165 to 190, and 191 to 206. The 6 X 16 AA approximate tandem repeats stretch occupies residues 117–218; it reads DAIDDEGEAE…IDDEGEAEED (102 aa). The span at 118-219 shows a compositional bias: acidic residues; it reads AIDDEGEAEE…DDEGEAEEDY (102 aa). A 1-6; truncated repeat occupies 207 to 218; it reads DAIDDEGEAEED. Positions 785-807 match the Nuclear export signal motif; the sequence is QPIPSVDLAENLMQYRNEILGLD.

Belongs to the alphaherpesvirinae HHV-1 UL47 family. As to quaternary structure, interacts with US3 kinase. Interacts with ORF24 and ORF27; these interactions seem important for efficient virion nuclear egress. Interacts with ORF17/VHS. Interacts with ORF9. Phosphorylated by US3. This phosphorylation is required for proper nuclear localization.

The protein resides in the virion tegument. It localises to the host nucleus. Its subcellular location is the host cytoplasm. Functionally, tegument protein that can bind to various RNA transcripts. Plays a role in the attenuation of selective viral and cellular mRNA degradation by modulating the activity of host shutoff RNase ORF17/VHS. Also plays a role in the primary envelopment of virions in the perinuclear space, probably by interacting with two nuclear egress proteins ORF24 and ORF27. This chain is Tegument protein UL47 homolog, found in Varicella-zoster virus (strain Dumas) (HHV-3).